Reading from the N-terminus, the 1070-residue chain is Inactive tyrosine-protein kinase 7 (1070 aa).

Residues 1 to 30 (MGAARGSPARPRRLPLLSVLLLPLLGGTQT) form the signal peptide. 7 Ig-like C2-type domains span residues 31–120 (AIVF…ASFN), 128–218 (PVVL…FTLS), 225–317 (ARVV…EATL), 309–407 (PPII…VNIT), 412–497 (PSWL…ARVQ), 503–586 (KFTP…HVQL), and 578–680 (GQIR…APLY). At 31–704 (AIVFIKQPSS…SPPPYKMIQT (674 aa)) the chain is on the extracellular side. The cysteines at positions 53 and 101 are disulfide-linked. Asn-116, Asn-175, Asn-184, Asn-214, Asn-268, and Asn-283 each carry an N-linked (GlcNAc...) asparagine glycan. Cys-150 and Cys-200 are joined by a disulfide. Disulfide bonds link Cys-246/Cys-301 and Cys-343/Cys-391. N-linked (GlcNAc...) asparagine glycosylation is found at Asn-405, Asn-463, Asn-567, and Asn-646. 3 cysteine pairs are disulfide-bonded: Cys-433–Cys-481, Cys-524–Cys-570, and Cys-613–Cys-664. Residues 705–725 (IGLSVGAAVAYIIAVLGLMFY) traverse the membrane as a helical segment. Residues 726-1070 (CKKRCKAKRL…LGDSTVDSKP (345 aa)) lie on the Cytoplasmic side of the membrane. 2 disordered regions span residues 736 to 759 (QKQP…NGQP) and 773 to 793 (GSGP…HFPR). Positions 794 to 1070 (SSLQPITTLG…LGDSTVDSKP (277 aa)) are interaction with CTNNB1. Residues 796–1066 (LQPITTLGKS…IASALGDSTV (271 aa)) form the Protein kinase; inactive domain. Ser-1064 is subject to Phosphoserine.

It belongs to the protein kinase superfamily. Tyr protein kinase family. Insulin receptor subfamily. In terms of assembly, interacts with CTNNB1. Post-translationally, MMP14 cleaves PTK7 between Pro-621 and Leu-622 generating an N-terminal soluble (70 kDa) fragment and a membrane C-terminal (50 kDa) fragment. Proteolysis by MMP14 regulates PTK7 function in non-canonical Wnt signaling pathway. In terms of tissue distribution, highly expressed in lung, liver, pancreas, kidney, placenta and melanocytes. Weakly expressed in thyroid gland, ovary, brain, heart and skeletal muscle. Also expressed in erythroleukemia cells. But not expressed in colon.

The protein resides in the membrane. It localises to the cell junction. In terms of biological role, inactive tyrosine kinase involved in Wnt signaling pathway. Component of both the non-canonical (also known as the Wnt/planar cell polarity signaling) and the canonical Wnt signaling pathway. Functions in cell adhesion, cell migration, cell polarity, proliferation, actin cytoskeleton reorganization and apoptosis. Has a role in embryogenesis, epithelial tissue organization and angiogenesis. The sequence is that of Inactive tyrosine-protein kinase 7 (PTK7) from Homo sapiens (Human).